A 367-amino-acid polypeptide reads, in one-letter code: Histidinol-phosphate aminotransferase (367 aa).

Lys221 is subject to N6-(pyridoxal phosphate)lysine.

This sequence belongs to the class-II pyridoxal-phosphate-dependent aminotransferase family. Histidinol-phosphate aminotransferase subfamily. As to quaternary structure, homodimer. Pyridoxal 5'-phosphate is required as a cofactor.

It catalyses the reaction L-histidinol phosphate + 2-oxoglutarate = 3-(imidazol-4-yl)-2-oxopropyl phosphate + L-glutamate. It functions in the pathway amino-acid biosynthesis; L-histidine biosynthesis; L-histidine from 5-phospho-alpha-D-ribose 1-diphosphate: step 7/9. This is Histidinol-phosphate aminotransferase from Paracoccus denitrificans (strain Pd 1222).